The sequence spans 466 residues: DNA polymerase delta subunit 3 (466 aa).

Ala2 bears the N-acetylalanine mark. Disordered regions lie at residues 169 to 188 and 199 to 232; these read NNELTTNGHGPPASKQVSQQ and KAAAKTQETNKETKTEAKEVTNASAAGNKAPGKG. The span at 206-217 shows a compositional bias: basic and acidic residues; the sequence is ETNKETKTEAKE. Residue Lys258 forms a Glycyl lysine isopeptide (Lys-Gly) (interchain with G-Cter in SUMO); alternate linkage. Residue Lys258 forms a Glycyl lysine isopeptide (Lys-Gly) (interchain with G-Cter in SUMO2); alternate linkage. A Glycyl lysine isopeptide (Lys-Gly) (interchain with G-Cter in SUMO2) cross-link involves residue Lys261. Disordered regions lie at residues 274 to 393 and 406 to 466; these read KLAT…KTYL and ESES…FQRK. The residue at position 277 (Thr277) is a Phosphothreonine. Over residues 286–296 the composition is skewed to basic and acidic residues; sequence KKAEPVKVLQK. The residue at position 307 (Ser307) is a Phosphoserine. A compositionally biased stretch (pro residues) spans 349 to 361; sequence PSPPPPPSPPLEP. Ser407 and Ser409 each carry phosphoserine. Thr411 is modified (phosphothreonine). Ser413 bears the Phosphoserine mark. The segment covering 432 to 441 has biased composition (basic and acidic residues); sequence VKKEPREERK. Residue Lys433 forms a Glycyl lysine isopeptide (Lys-Gly) (interchain with G-Cter in SUMO); alternate linkage. Lys433 participates in a covalent cross-link: Glycyl lysine isopeptide (Lys-Gly) (interchain with G-Cter in SUMO2); alternate. Positions 455 to 466 are enriched in polar residues; the sequence is RQVSITGFFQRK. The PIP-box motif lies at 456–463; the sequence is QVSITGFF. Ser458 is subject to Phosphoserine.

In terms of assembly, component of both the DNA polymerase delta and DNA polymerase zeta complexes. The tetrameric DNA polymerase delta complex (Pol-delta4), which consists of POLD1/p125, POLD2/p50, POLD3/p66/p68 and POLD4/p12, with POLD1 bearing DNA polymerase and 3' to 5' proofreading exonuclease activities. Within this complex, directly interacts with POLD2. Following stress caused by DNA damaging agents or by replication stress, POLD4 is degraded and Pol-delta4 is converted into a trimeric form of the complex (Pol-delta3), which consists of POLD1, POLD2 and POLD3. Pol-delta3 is the major form occurring at S phase replication sites, as well as DNA damage sites. Directly interacts with PCNA, as do POLD1 and POLD4; this interaction stimulates Pol-delta polymerase activity. POLD3 phosphorylation at Ser-458 impairs PCNA binding. Component of the DNA polymerase zeta complex (POLZ), which consists of REV3L, MAD2L2, POLD2 and POLD3, with REV3L bearing DNA polymerase catalytic activity. The DNA polymerase delta complex interacts with POLDIP2; this interaction is probably mediated through direct binding to POLD2. Ubiquitinated, but not targeted to the proteasome. Sumoylated. Sumoylation with SUMO3 may be predominant. In terms of processing, phosphorylation at Ser-458 is catalyzed in vitro by PKA. It is thought to decrease the affinity for PCNA and Pol-delta4 processivity. Can also be phosphorylated in vitro by CDK1-cyclin-A complex, as well as CDK2-cyclin-A and CDK2-cyclin-E complexes. PCNA interferes with CDK-cyclin phosphorylation.

It localises to the cytoplasm. Its subcellular location is the nucleus. In terms of biological role, accessory component of both the DNA polymerase delta complex and the DNA polymerase zeta complex. As a component of the trimeric and tetrameric DNA polymerase delta complexes (Pol-delta3 and Pol-delta4, respectively), plays a role in high fidelity genome replication, including in lagging strand synthesis, and repair. Required for optimal Pol-delta activity. Stabilizes the Pol-delta complex and plays a major role in Pol-delta stimulation by PCNA. Pol-delta3 and Pol-delta4 are characterized by the absence or the presence of POLD4. They exhibit differences in catalytic activity. Most notably, Pol-delta3 shows higher proofreading activity than Pol-delta4. Although both Pol-delta3 and Pol-delta4 process Okazaki fragments in vitro, Pol-delta3 may also be better suited to fulfill this task, exhibiting near-absence of strand displacement activity compared to Pol-delta4 and stalling on encounter with the 5'-blocking oligonucleotides. Pol-delta3 idling process may avoid the formation of a gap, while maintaining a nick that can be readily ligated. Along with DNA polymerase kappa, DNA polymerase delta carries out approximately half of nucleotide excision repair (NER) synthesis following UV irradiation. In this context, POLD3, along with PCNA and RFC1-replication factor C complex, is required to recruit POLD1, the catalytic subunit of the polymerase delta complex, to DNA damage sites. Under conditions of DNA replication stress, required for the repair of broken replication forks through break-induced replication (BIR). Involved in the translesion synthesis (TLS) of templates carrying O6-methylguanine or abasic sites performed by Pol-delta4, independently of DNA polymerase zeta (REV3L) or eta (POLH). Facilitates abasic site bypass by DNA polymerase delta by promoting extension from the nucleotide inserted opposite the lesion. Also involved in TLS, as a component of the tetrameric DNA polymerase zeta complex. Along with POLD2, dramatically increases the efficiency and processivity of DNA synthesis of the DNA polymerase zeta complex compared to the minimal zeta complex, consisting of only REV3L and REV7. The protein is DNA polymerase delta subunit 3 (POLD3) of Homo sapiens (Human).